Consider the following 431-residue polypeptide: Anaerobic glycerol-3-phosphate dehydrogenase subunit B (431 aa).

This sequence belongs to the anaerobic G-3-P dehydrogenase subunit B family. As to quaternary structure, composed of a catalytic GlpA/B dimer and of membrane bound GlpC. It depends on FMN as a cofactor.

The catalysed reaction is a quinone + sn-glycerol 3-phosphate = dihydroxyacetone phosphate + a quinol. The protein operates within polyol metabolism; glycerol degradation via glycerol kinase pathway; glycerone phosphate from sn-glycerol 3-phosphate (anaerobic route): step 1/1. Functionally, conversion of glycerol 3-phosphate to dihydroxyacetone. Uses fumarate or nitrate as electron acceptor. The sequence is that of Anaerobic glycerol-3-phosphate dehydrogenase subunit B from Mannheimia succiniciproducens (strain KCTC 0769BP / MBEL55E).